The following is a 101-amino-acid chain: Iron-sulfur cluster assembly protein CyaY (101 aa).

Belongs to the frataxin family.

Involved in iron-sulfur (Fe-S) cluster assembly. May act as a regulator of Fe-S biogenesis. In Actinobacillus pleuropneumoniae serotype 7 (strain AP76), this protein is Iron-sulfur cluster assembly protein CyaY.